The sequence spans 359 residues: 3-dehydroquinate synthase (359 aa).

NAD(+)-binding positions include 71 to 76 (DGEQYK), 105 to 109 (GVIGD), 129 to 130 (TT), K142, K151, and 169 to 172 (CLST). Residues E184, H247, and H264 each coordinate Zn(2+).

This sequence belongs to the sugar phosphate cyclases superfamily. Dehydroquinate synthase family. It depends on Co(2+) as a cofactor. Zn(2+) is required as a cofactor. NAD(+) serves as cofactor.

It localises to the cytoplasm. It carries out the reaction 7-phospho-2-dehydro-3-deoxy-D-arabino-heptonate = 3-dehydroquinate + phosphate. Its pathway is metabolic intermediate biosynthesis; chorismate biosynthesis; chorismate from D-erythrose 4-phosphate and phosphoenolpyruvate: step 2/7. Functionally, catalyzes the conversion of 3-deoxy-D-arabino-heptulosonate 7-phosphate (DAHP) to dehydroquinate (DHQ). In Shewanella halifaxensis (strain HAW-EB4), this protein is 3-dehydroquinate synthase.